Consider the following 249-residue polypeptide: DNA polymerase sliding clamp (249 aa).

This sequence belongs to the PCNA family. As to quaternary structure, homotrimer which circularizes head-to-tail (head is a N-terminus, tail is at C-terminus) to form a toroid. RFC opens the toroid so it can load on DNA. Interacts with both Pol I (pol) and Pol II (polB-polC), with Hel308 (hjm) and with Hjc. Interaction with the C-terminal PIP-box of RfcL may stabilize the toroidal structure.

Functionally, sliding clamp subunit that acts as a moving platform for DNA processing. Responsible for tethering the catalytic subunit of DNA polymerase to DNA during high-speed replication. Unlike its eukaryotic paralog, loads on circular DNA without the replication factor C (RFC) clamp loader, although RFC greatly increases loading efficiency. Stimulates the ATPase activity of replication factor C (RFC) in the presence of ssDNA. Stimulates the helicase activity of Hel308 and may alter its substrate specificity. This chain is DNA polymerase sliding clamp, found in Pyrococcus furiosus (strain ATCC 43587 / DSM 3638 / JCM 8422 / Vc1).